The sequence spans 288 residues: Shikimate dehydrogenase (NADP(+)) (288 aa).

Shikimate contacts are provided by residues 15–17 (SKS) and Thr64. Lys68 acts as the Proton acceptor in catalysis. Glu83 is an NADP(+) binding site. The shikimate site is built by Asn92 and Asp117. Residues 141-145 (GAGGA), 165-170 (NRTLSK), and Met232 contribute to the NADP(+) site. Position 234 (Tyr234) interacts with shikimate. Gly254 contacts NADP(+).

The protein belongs to the shikimate dehydrogenase family. Homodimer.

The catalysed reaction is shikimate + NADP(+) = 3-dehydroshikimate + NADPH + H(+). Its pathway is metabolic intermediate biosynthesis; chorismate biosynthesis; chorismate from D-erythrose 4-phosphate and phosphoenolpyruvate: step 4/7. Functionally, involved in the biosynthesis of the chorismate, which leads to the biosynthesis of aromatic amino acids. Catalyzes the reversible NADPH linked reduction of 3-dehydroshikimate (DHSA) to yield shikimate (SA). This chain is Shikimate dehydrogenase (NADP(+)), found in Psychrobacter arcticus (strain DSM 17307 / VKM B-2377 / 273-4).